The chain runs to 439 residues: UPF0489 protein C5orf22 homolog (439 aa).

Residues 163 to 219 (TTKLENGQSGAKIPKAAQTQDDMQSKADTPCTSSSQPPDGSAASGNISETAKKKADD) are disordered. Over residues 179–211 (AQTQDDMQSKADTPCTSSSQPPDGSAASGNISE) the composition is skewed to polar residues.

The protein belongs to the UPF0489 family.

The chain is UPF0489 protein C5orf22 homolog from Danio rerio (Zebrafish).